Here is a 191-residue protein sequence, read N- to C-terminus: Protein Ves (191 aa).

It belongs to the Ves family.

This Escherichia coli O8 (strain IAI1) protein is Protein Ves.